Reading from the N-terminus, the 248-residue chain is Probable transcriptional regulatory protein Acid345_2125 (248 aa).

Belongs to the TACO1 family.

Its subcellular location is the cytoplasm. The polypeptide is Probable transcriptional regulatory protein Acid345_2125 (Koribacter versatilis (strain Ellin345)).